A 175-amino-acid chain; its full sequence is NADH-quinone oxidoreductase subunit I (175 aa).

2 4Fe-4S ferredoxin-type domains span residues 69–98 (KRDE…IEAG) and 115–144 (KKFE…LDGP). 8 residues coordinate [4Fe-4S] cluster: Cys78, Cys81, Cys84, Cys88, Cys124, Cys127, Cys130, and Cys134.

It belongs to the complex I 23 kDa subunit family. NDH-1 is composed of 14 different subunits. Subunits NuoA, H, J, K, L, M, N constitute the membrane sector of the complex. It depends on [4Fe-4S] cluster as a cofactor.

The protein resides in the cell inner membrane. The enzyme catalyses a quinone + NADH + 5 H(+)(in) = a quinol + NAD(+) + 4 H(+)(out). Its function is as follows. NDH-1 shuttles electrons from NADH, via FMN and iron-sulfur (Fe-S) centers, to quinones in the respiratory chain. The immediate electron acceptor for the enzyme in this species is believed to be ubiquinone. Couples the redox reaction to proton translocation (for every two electrons transferred, four hydrogen ions are translocated across the cytoplasmic membrane), and thus conserves the redox energy in a proton gradient. This is NADH-quinone oxidoreductase subunit I from Leptospira borgpetersenii serovar Hardjo-bovis (strain JB197).